Consider the following 55-residue polypeptide: Large ribosomal subunit protein bL33 (55 aa).

Belongs to the bacterial ribosomal protein bL33 family.

The sequence is that of Large ribosomal subunit protein bL33 from Beijerinckia indica subsp. indica (strain ATCC 9039 / DSM 1715 / NCIMB 8712).